The following is a 225-amino-acid chain: Cyclin-dependent kinase inhibitor 3 (225 aa).

Disordered regions lie at residues 47 to 94 and 130 to 169; these read AAAA…QRRR and ERKS…PLSP. Residues 55-67 show a composition bias toward basic residues; it reads CRRRHRRGGRRGC. Residues 71–82 are compositionally biased toward low complexity; that stretch reads GAGSARACGARS. Positions 143 to 153 are enriched in basic and acidic residues; that stretch reads VAAEHAGEHKH.

This sequence belongs to the CDI family. ICK/KRP subfamily.

The sequence is that of Cyclin-dependent kinase inhibitor 3 (KRP3) from Oryza sativa subsp. japonica (Rice).